Here is a 421-residue protein sequence, read N- to C-terminus: Gamma-glutamyl phosphate reductase (421 aa).

It belongs to the gamma-glutamyl phosphate reductase family.

It is found in the cytoplasm. The enzyme catalyses L-glutamate 5-semialdehyde + phosphate + NADP(+) = L-glutamyl 5-phosphate + NADPH + H(+). It participates in amino-acid biosynthesis; L-proline biosynthesis; L-glutamate 5-semialdehyde from L-glutamate: step 2/2. Functionally, catalyzes the NADPH-dependent reduction of L-glutamate 5-phosphate into L-glutamate 5-semialdehyde and phosphate. The product spontaneously undergoes cyclization to form 1-pyrroline-5-carboxylate. This chain is Gamma-glutamyl phosphate reductase, found in Brucella melitensis biotype 1 (strain ATCC 23456 / CCUG 17765 / NCTC 10094 / 16M).